Reading from the N-terminus, the 228-residue chain is Auxin-responsive protein IAA16 (228 aa).

The short motif at 19–23 is the EAR-like (transcriptional repression) element; the sequence is LSLAL. Over residues 28–39 the composition is skewed to polar residues; it reads SSSGLQGNTSTA. Disordered stretches follow at residues 28 to 57 and 70 to 90; these read SSSG…PAAP and NLAS…AAAA. Residues 97–214 enclose the PB1 domain; that stretch reads ARFVKVNMDG…RVLRSSDLNA (118 aa).

This sequence belongs to the Aux/IAA family. As to quaternary structure, homodimers and heterodimers. As to expression, expressed in roots, flowers and seedlings.

The protein resides in the nucleus. In terms of biological role, aux/IAA proteins are short-lived transcriptional factors that function as repressors of early auxin response genes at low auxin concentrations. The protein is Auxin-responsive protein IAA16 (IAA16) of Oryza sativa subsp. japonica (Rice).